A 388-amino-acid polypeptide reads, in one-letter code: Chorismate synthase (388 aa).

2 residues coordinate NADP(+): Arg-39 and Arg-45. Residues 130 to 132 (RSS), 251 to 252 (NA), Gly-296, 311 to 315 (KPIPT), and Arg-337 contribute to the FMN site.

Belongs to the chorismate synthase family. In terms of assembly, homotetramer. Requires FMNH2 as cofactor.

It catalyses the reaction 5-O-(1-carboxyvinyl)-3-phosphoshikimate = chorismate + phosphate. It functions in the pathway metabolic intermediate biosynthesis; chorismate biosynthesis; chorismate from D-erythrose 4-phosphate and phosphoenolpyruvate: step 7/7. In terms of biological role, catalyzes the anti-1,4-elimination of the C-3 phosphate and the C-6 proR hydrogen from 5-enolpyruvylshikimate-3-phosphate (EPSP) to yield chorismate, which is the branch point compound that serves as the starting substrate for the three terminal pathways of aromatic amino acid biosynthesis. This reaction introduces a second double bond into the aromatic ring system. The protein is Chorismate synthase of Streptococcus pneumoniae (strain ATCC 700669 / Spain 23F-1).